The primary structure comprises 81 residues: ATP synthase subunit c (81 aa).

Transmembrane regions (helical) follow at residues 6-26 (ASAS…GPGI) and 57-77 (LAFM…LLFA).

This sequence belongs to the ATPase C chain family. F-type ATPases have 2 components, F(1) - the catalytic core - and F(0) - the membrane proton channel. F(1) has five subunits: alpha(3), beta(3), gamma(1), delta(1), epsilon(1). F(0) has four main subunits: a(1), b(1), b'(1) and c(10-14). The alpha and beta chains form an alternating ring which encloses part of the gamma chain. F(1) is attached to F(0) by a central stalk formed by the gamma and epsilon chains, while a peripheral stalk is formed by the delta, b and b' chains.

The protein localises to the cellular thylakoid membrane. Its function is as follows. F(1)F(0) ATP synthase produces ATP from ADP in the presence of a proton or sodium gradient. F-type ATPases consist of two structural domains, F(1) containing the extramembraneous catalytic core and F(0) containing the membrane proton channel, linked together by a central stalk and a peripheral stalk. During catalysis, ATP synthesis in the catalytic domain of F(1) is coupled via a rotary mechanism of the central stalk subunits to proton translocation. In terms of biological role, key component of the F(0) channel; it plays a direct role in translocation across the membrane. A homomeric c-ring of between 10-14 subunits forms the central stalk rotor element with the F(1) delta and epsilon subunits. The sequence is that of ATP synthase subunit c from Gloeothece citriformis (strain PCC 7424) (Cyanothece sp. (strain PCC 7424)).